Reading from the N-terminus, the 466-residue chain is Dynein axonemal assembly factor 11 (466 aa).

LRR repeat units follow at residues 22 to 43 (SLEE…DKWC), 45 to 66 (DLKI…SKLK), 67 to 88 (KLEY…EGCE), and 89 to 110 (ELAK…KNLQ). The 39-residue stretch at 123 to 161 (NPCASFDHYREFVVATLPQLKWLDGKEIEPSERIKALQD) folds into the LRRCT domain. Positions 178–204 (LKRAKLKEEAQRKHQEEDKNEDKRSNA) form a coiled coil. The segment covering 185–202 (EEAQRKHQEEDKNEDKRS) has biased composition (basic and acidic residues). 3 disordered regions span residues 185-206 (EEAQ…NAGF), 268-288 (MEKQ…VKPP), and 391-466 (AFKS…PPLI). Over residues 269 to 287 (EKQRKKQEKLSEKKKKVKP) the composition is skewed to basic residues. In terms of domain architecture, CS spans 301 to 396 (VNEPKIDFSL…GGQRAFKSMK (96 aa)). Composition is skewed to basic and acidic residues over residues 398–425 (TSDR…KHSF) and 433–445 (QEKK…RPEP). A compositionally biased stretch (acidic residues) spans 450-460 (SEEDPTFEDNP).

This sequence belongs to the tilB family. In terms of assembly, interacts (via CS domain) with ZMYND10 (via C-terminus). Expressed predominantly in testis and in nasal epithelial cells.

The protein localises to the cytoplasm. The protein resides in the cell projection. It localises to the cilium. Its subcellular location is the dynein axonemal particle. It is found in the flagellum. Functionally, involved in dynein arm assembly, is important for expression and transporting outer dynein arm (ODA) proteins from the cytoplasm to the cilia. Acts as a crucial component in the formation and motility of spermatozoal flagella. The sequence is that of Dynein axonemal assembly factor 11 from Homo sapiens (Human).